Reading from the N-terminus, the 149-residue chain is UPF0178 protein VF_0601 (149 aa).

This sequence belongs to the UPF0178 family.

This chain is UPF0178 protein VF_0601, found in Aliivibrio fischeri (strain ATCC 700601 / ES114) (Vibrio fischeri).